Reading from the N-terminus, the 253-residue chain is Chloride intracellular channel protein 4 (253 aa).

Residue Ala2 is modified to N-acetylalanine. The interval 2–101 (ALSMPLNGLK…EEFLEEVLCP (100 aa)) is required for insertion into the membrane. Ser4 carries the phosphoserine modification. The residue at position 24 (Lys24) is an N6-acetyllysine. A helical membrane pass occupies residues 37 to 57 (FSQRLFMILWLKGVVFSVSTV). Positions 81–244 (NSEVKTDVNK…PSDKEVEIAY (164 aa)) constitute a GST C-terminal domain. N6-acetyllysine is present on Lys130. Phosphoserine is present on residues Ser132, Ser167, and Ser236. Tyr244 carries the phosphotyrosine modification.

Belongs to the chloride channel CLIC family. As to quaternary structure, monomer. Interacts with HRH3.

It localises to the cytoplasm. It is found in the cytoskeleton. The protein localises to the microtubule organizing center. Its subcellular location is the centrosome. The protein resides in the cytoplasmic vesicle membrane. It localises to the nucleus. It is found in the cell membrane. The protein localises to the mitochondrion. Its subcellular location is the cell junction. It catalyses the reaction chloride(in) = chloride(out). It carries out the reaction thiocyanate(in) = thiocyanate(out). The enzyme catalyses nitrate(in) = nitrate(out). The catalysed reaction is iodide(out) = iodide(in). It catalyses the reaction bromide(in) = bromide(out). It carries out the reaction fluoride(in) = fluoride(out). The enzyme catalyses choline(out) = choline(in). Functionally, in the soluble state, catalyzes glutaredoxin-like thiol disulfide exchange reactions with reduced glutathione as electron donor. Can insert into membranes and form voltage-dependent multi-ion conductive channels. Membrane insertion seems to be redox-regulated and may occur only under oxidizing conditions. Has alternate cellular functions like a potential role in angiogenesis or in maintaining apical-basolateral membrane polarity during mitosis and cytokinesis. Could also promote endothelial cell proliferation and regulate endothelial morphogenesis (tubulogenesis). Promotes cell-surface expression of HRH3. In Pongo abelii (Sumatran orangutan), this protein is Chloride intracellular channel protein 4 (CLIC4).